The primary structure comprises 311 residues: MQRFIKWLAVITSLDLLIVLLGGALVTKTGSGQGCGKSWPLCNGEFVPSNLSMETIIELSHRLTSGSAGILVTLLCILSWKYYKHVRETKTLAILSFVFLVAQALMGAAAVVWGQMPAVLAIHFGISLISFASVILLTCLIFEIDQKFDARSLIMDKKMKFHIYGVTIYSYIVVYTGALVRHERASLACPDFPLCSKNRPMPTQLHEWVQMGHRVAAMLIFAWILYAMILAIRHYKQQPVVYWGWIISFILVTLQAIVGILVVFTNASLSMALLHSLFISCLFAVLCYLVMLGTRSKVNAKEAASISKQTK.

Topologically, residues 1 to 6 (MQRFIK) are cytoplasmic. A helical membrane pass occupies residues 7–27 (WLAVITSLDLLIVLLGGALVT). The Extracellular portion of the chain corresponds to 28–62 (KTGSGQGCGKSWPLCNGEFVPSNLSMETIIELSHR). The cysteines at positions 35 and 42 are disulfide-linked. Residue Glu58 is part of the active site. His61 provides a ligand contact to heme o. Residues 63 to 83 (LTSGSAGILVTLLCILSWKYY) form a helical membrane-spanning segment. The Cytoplasmic portion of the chain corresponds to 84–91 (KHVRETKT). The helical transmembrane segment at 92–112 (LAILSFVFLVAQALMGAAAVV) threads the bilayer. At 113–121 (WGQMPAVLA) the chain is on the extracellular side. The chain crosses the membrane as a helical span at residues 122–142 (IHFGISLISFASVILLTCLIF). A heme o-binding site is contributed by His123. Residues 143–159 (EIDQKFDARSLIMDKKM) are Cytoplasmic-facing. Residues 160–180 (KFHIYGVTIYSYIVVYTGALV) form a helical membrane-spanning segment. The Extracellular portion of the chain corresponds to 181–211 (RHERASLACPDFPLCSKNRPMPTQLHEWVQM). An intrachain disulfide couples Cys189 to Cys195. The chain crosses the membrane as a helical span at residues 212–232 (GHRVAAMLIFAWILYAMILAI). A heme b-binding site is contributed by His213. Residues 233 to 243 (RHYKQQPVVYW) lie on the Cytoplasmic side of the membrane. Residues 244–264 (GWIISFILVTLQAIVGILVVF) traverse the membrane as a helical segment. At 265 to 271 (TNASLSM) the chain is on the extracellular side. The chain crosses the membrane as a helical span at residues 272–292 (ALLHSLFISCLFAVLCYLVML). Position 275 (His275) interacts with heme b. The Cytoplasmic segment spans residues 293–311 (GTRSKVNAKEAASISKQTK).

It belongs to the COX15/CtaA family. Type 1 subfamily. Interacts with CtaB. Heme b is required as a cofactor.

Its subcellular location is the cell membrane. The enzyme catalyses Fe(II)-heme o + 2 A + H2O = Fe(II)-heme a + 2 AH2. It functions in the pathway porphyrin-containing compound metabolism; heme A biosynthesis; heme A from heme O: step 1/1. In terms of biological role, catalyzes the conversion of heme O to heme A by two successive hydroxylations of the methyl group at C8. The first hydroxylation forms heme I, the second hydroxylation results in an unstable dihydroxymethyl group, which spontaneously dehydrates, resulting in the formyl group of heme A. This Bacillus cereus (strain AH187) protein is Heme A synthase.